The primary structure comprises 865 residues: Carbohydrate-responsive element-binding protein (865 aa).

Disordered regions lie at residues 15–41 and 53–77; these read PRVVPSPDSDSDTDLEDPSPRRSAGGL and MVSSPHSDSLTRRRDQEGPVGLADF. Ser20, Ser23, and Ser25 each carry phosphoserine. A Phosphothreonine modification is found at Thr27. Ser196 bears the Phosphoserine mark. Disordered stretches follow at residues 334 to 392 and 500 to 653; these read GILG…TKMP and QPRC…LSRG. Over residues 351–368 the composition is skewed to polar residues; the sequence is GMTPLSGNTRLQARNSCS. The segment covering 515-533 has biased composition (low complexity); sequence ASPPTLTSATASPTATATA. Phosphoserine; by AMPK is present on Ser568. Residues 583–597 are compositionally biased toward pro residues; sequence PPIPAPTPPRPPPGP. Ser615, Ser627, and Ser644 each carry phosphoserine. The 55-residue stretch at 662-716 folds into the bHLH domain; it reads NRRITHISAEQKRRFNIKLGFDTLHGLVSTLSAQPSLKVSKATTLQKTAEYILML. Residues 716 to 737 are leucine-zipper; it reads LQQERAAMQEEAQQLRDEIEEL.

Binds DNA as a heterodimer with TCFL4/MLX. Phosphorylation at Ser-568 by AMPK inactivates the DNA-binding activity.

Its subcellular location is the nucleus. Functionally, transcriptional repressor. Binds to the canonical and non-canonical E box sequences 5'-CACGTG-3'. This chain is Carbohydrate-responsive element-binding protein (Mlxipl), found in Rattus norvegicus (Rat).